Here is a 283-residue protein sequence, read N- to C-terminus: uncharacterized protein (283 aa).

This is an uncharacterized protein from Streptomyces coelicolor (strain ATCC BAA-471 / A3(2) / M145).